The following is an 89-amino-acid chain: MSLSTEAKAQIIAEFGRDANDSGSSEVQVALLTAQINHLQGHFSEHKKDHHSRRGLLRMVSQRRKLLDYLKRKNVTSYTALIGRLGLRR.

Belongs to the universal ribosomal protein uS15 family. As to quaternary structure, part of the 30S ribosomal subunit. Forms a bridge to the 50S subunit in the 70S ribosome, contacting the 23S rRNA.

Its function is as follows. One of the primary rRNA binding proteins, it binds directly to 16S rRNA where it helps nucleate assembly of the platform of the 30S subunit by binding and bridging several RNA helices of the 16S rRNA. Functionally, forms an intersubunit bridge (bridge B4) with the 23S rRNA of the 50S subunit in the ribosome. In Photorhabdus luminescens (Xenorhabdus luminescens), this protein is Small ribosomal subunit protein uS15.